A 405-amino-acid chain; its full sequence is Glucose-1-phosphate adenylyltransferase (405 aa).

Alpha-D-glucose 1-phosphate is bound by residues Gly-164, 179 to 180, and Ser-197; that span reads EK.

The protein belongs to the bacterial/plant glucose-1-phosphate adenylyltransferase family. In terms of assembly, homotetramer.

It catalyses the reaction alpha-D-glucose 1-phosphate + ATP + H(+) = ADP-alpha-D-glucose + diphosphate. The protein operates within glycan biosynthesis; glycogen biosynthesis. Functionally, involved in the biosynthesis of ADP-glucose, a building block required for the elongation reactions to produce glycogen. Catalyzes the reaction between ATP and alpha-D-glucose 1-phosphate (G1P) to produce pyrophosphate and ADP-Glc. The polypeptide is Glucose-1-phosphate adenylyltransferase (Corynebacterium jeikeium (strain K411)).